The following is a 205-amino-acid chain: MTENQQLTALVAACHWIGEKGWCPATGGNMSVRLDDAQCLITESGKDKGSLQTEDFLLVDIATNHVPSGRTPSAETGLHTLLYRREPTIGAVLHTHSVNATVLSRVEKGAELVLHGYEMQKSLAGQTTHLDRVVIPIFDNDQDIPALAQRVTEFASHTPLRYGFLVRGHGLYCWGATVKEARRHLEGLEFLFQCELQRRLLEAKA.

Residues His94 and His96 each coordinate Zn(2+).

The protein belongs to the aldolase class II family. MtnB subfamily. Requires Zn(2+) as cofactor.

The catalysed reaction is 5-(methylsulfanyl)-D-ribulose 1-phosphate = 5-methylsulfanyl-2,3-dioxopentyl phosphate + H2O. It participates in amino-acid biosynthesis; L-methionine biosynthesis via salvage pathway; L-methionine from S-methyl-5-thio-alpha-D-ribose 1-phosphate: step 2/6. Functionally, catalyzes the dehydration of methylthioribulose-1-phosphate (MTRu-1-P) into 2,3-diketo-5-methylthiopentyl-1-phosphate (DK-MTP-1-P). The chain is Methylthioribulose-1-phosphate dehydratase from Pectobacterium atrosepticum (strain SCRI 1043 / ATCC BAA-672) (Erwinia carotovora subsp. atroseptica).